A 168-amino-acid chain; its full sequence is S-ribosylhomocysteine lyase (168 aa).

Residues His54, His58, and Cys128 each contribute to the Fe cation site.

It belongs to the LuxS family. Homodimer. Fe cation serves as cofactor.

It carries out the reaction S-(5-deoxy-D-ribos-5-yl)-L-homocysteine = (S)-4,5-dihydroxypentane-2,3-dione + L-homocysteine. Functionally, involved in the synthesis of autoinducer 2 (AI-2) which is secreted by bacteria and is used to communicate both the cell density and the metabolic potential of the environment. The regulation of gene expression in response to changes in cell density is called quorum sensing. Catalyzes the transformation of S-ribosylhomocysteine (RHC) to homocysteine (HC) and 4,5-dihydroxy-2,3-pentadione (DPD). The protein is S-ribosylhomocysteine lyase of Histophilus somni (strain 2336) (Haemophilus somnus).